The sequence spans 362 residues: 3-dehydroquinate synthase (362 aa).

Residues Asp-70 to Lys-75, Gly-104 to Asp-108, Thr-128 to Thr-129, Lys-141, and Lys-150 contribute to the NAD(+) site. Zn(2+) contacts are provided by Glu-183, His-246, and His-263.

Belongs to the sugar phosphate cyclases superfamily. Dehydroquinate synthase family. Requires NAD(+) as cofactor. The cofactor is Co(2+). Zn(2+) serves as cofactor.

The protein resides in the cytoplasm. It catalyses the reaction 7-phospho-2-dehydro-3-deoxy-D-arabino-heptonate = 3-dehydroquinate + phosphate. Its pathway is metabolic intermediate biosynthesis; chorismate biosynthesis; chorismate from D-erythrose 4-phosphate and phosphoenolpyruvate: step 2/7. Its function is as follows. Catalyzes the conversion of 3-deoxy-D-arabino-heptulosonate 7-phosphate (DAHP) to dehydroquinate (DHQ). The sequence is that of 3-dehydroquinate synthase from Pasteurella multocida (strain Pm70).